Here is a 472-residue protein sequence, read N- to C-terminus: Threonine synthase-like 2 (472 aa).

Residue Lys-113 is modified to N6-(pyridoxal phosphate)lysine.

This sequence belongs to the threonine synthase family. It depends on pyridoxal 5'-phosphate as a cofactor.

Acts as a catabolic phospho-lyase on both gamma- and beta-phosphorylated substrates. Degrades O-phospho-threonine (PThr) to alpha-ketobutyrate, ammonia and phosphate. This Xenopus laevis (African clawed frog) protein is Threonine synthase-like 2 (thnsl2).